We begin with the raw amino-acid sequence, 294 residues long: ATP synthase gamma chain (294 aa).

It belongs to the ATPase gamma chain family. As to quaternary structure, F-type ATPases have 2 components, CF(1) - the catalytic core - and CF(0) - the membrane proton channel. CF(1) has five subunits: alpha(3), beta(3), gamma(1), delta(1), epsilon(1). CF(0) has three main subunits: a, b and c.

Its subcellular location is the cell inner membrane. Its function is as follows. Produces ATP from ADP in the presence of a proton gradient across the membrane. The gamma chain is believed to be important in regulating ATPase activity and the flow of protons through the CF(0) complex. This Paramagnetospirillum magneticum (strain ATCC 700264 / AMB-1) (Magnetospirillum magneticum) protein is ATP synthase gamma chain.